Here is a 234-residue protein sequence, read N- to C-terminus: Probable glycerol uptake facilitator protein (234 aa).

2 helical membrane passes run 3 to 23 and 36 to 56; these read VYLA…GVVA and GWIV…YLVG. An NPA 1 motif is present at residues 64-66; it reads NPA. 3 helical membrane-spanning segments follow: residues 82 to 102, 134 to 154, and 164 to 184; these read VPGY…LVYL, LLTE…IGAN, and LVGF…GYAI. The short motif at 185–187 is the NPA 2 element; sequence NPA. Residues 214 to 234 form a helical membrane-spanning segment; it reads VPIIGPIIGGILGASLYNWLF.

The protein belongs to the MIP/aquaporin (TC 1.A.8) family.

The protein resides in the cell membrane. The catalysed reaction is glycerol(in) = glycerol(out). Mediates glycerol diffusion across the cytoplasmic membrane via a pore-type mechanism. The polypeptide is Probable glycerol uptake facilitator protein (glpF) (Thermotoga maritima (strain ATCC 43589 / DSM 3109 / JCM 10099 / NBRC 100826 / MSB8)).